We begin with the raw amino-acid sequence, 278 residues long: Secoisolariciresinol dehydrogenase (278 aa).

NAD(+) is bound by residues 23–28 (GGAGGI), Asp47, Val73, and Asn99. Residues Ser104 and Ser164 each contribute to the substrate site. The active-site Proton donor/acceptor is Tyr167. NAD(+) is bound by residues Lys171 and Val200.

The protein belongs to the short-chain dehydrogenases/reductases (SDR) family. In terms of assembly, homotetramer. As to expression, mostly expressed in stems and rhizomes, and, to a lower extent, in leaves.

The enzyme catalyses (-)-secoisolariciresinol + 2 NAD(+) = (-)-matairesinol + 2 NADH + 2 H(+). It functions in the pathway aromatic compound metabolism; phenylpropanoid biosynthesis. In terms of biological role, oxidoreductase involved in lignan biosynthesis. Also involved in the biosynthesis of etoposide, a chemotherapeutic compound of the topoisomerase inhibitor family. Catalyzes the stereospecific conversion of (-)-secoisolariciresinol to (-)-matairesinol via a lactol intermediate. The protein is Secoisolariciresinol dehydrogenase of Sinopodophyllum hexandrum (Himalayan may apple).